Consider the following 472-residue polypeptide: 4-aminobutyrate aminotransferase (472 aa).

Pyridoxal 5'-phosphate is bound at residue 135-136 (GA). Arg-193 is a binding site for substrate. Lys-327 carries the post-translational modification N6-(pyridoxal phosphate)lysine. Thr-352 provides a ligand contact to pyridoxal 5'-phosphate.

The protein belongs to the class-III pyridoxal-phosphate-dependent aminotransferase family. Homodimer and homotetramer. Pyridoxal 5'-phosphate serves as cofactor.

It localises to the cytoplasm. It catalyses the reaction 4-aminobutanoate + 2-oxoglutarate = succinate semialdehyde + L-glutamate. It participates in amino-acid degradation; L-arginine degradation. Its function is as follows. Required for the degradation of gamma-aminobutyric acid (GABA), which is important for utilization of GABA as nitrogen source and for oxidative stress tolerance. Deaminates GABA to succinate semialdehyde, which in turn is converted to succinate by the succinate-semialdehyde dehydrogenase UGA2. May be involved in an alternative, arginase-independent arginine degradation pathway via GABA. The chain is 4-aminobutyrate aminotransferase from Kluyveromyces lactis (strain ATCC 8585 / CBS 2359 / DSM 70799 / NBRC 1267 / NRRL Y-1140 / WM37) (Yeast).